The sequence spans 110 residues: Minor capsid protein VP2 (110 aa).

This sequence belongs to the vesivirus VP2 protein family. Homooligomer. The portal-like structure consists in 12 copies of VP2. Interacts with capsid protein VP1.

It localises to the virion. It is found in the host cytoplasm. Its function is as follows. Minor structural protein that forms a portal-like structure at a unique three-fold axis of symmetry, following binding to the host receptor. The channel formed by VP2 may allow the delivery of the viral genome through the host endosomal membrane. The polypeptide is Minor capsid protein VP2 (Otariidae (fur seals &amp; sea lions)).